We begin with the raw amino-acid sequence, 430 residues long: Mitochondrial distribution and morphology protein 10 (430 aa).

Over residues 215-234 (SSSAMNPPSGTSASETNGSG) the composition is skewed to polar residues. Disordered stretches follow at residues 215–237 (SSSA…GPSV) and 339–393 (LGAN…GPKE).

Belongs to the MDM10 family. Component of the ER-mitochondria encounter structure (ERMES) or MDM complex, composed of MMM1, MDM10, MDM12 and MDM34. Associates with the mitochondrial outer membrane sorting assembly machinery SAM(core) complex.

It localises to the mitochondrion outer membrane. Component of the ERMES/MDM complex, which serves as a molecular tether to connect the endoplasmic reticulum and mitochondria. Components of this complex are involved in the control of mitochondrial shape and protein biogenesis and may function in phospholipid exchange. MDM10 is involved in the late assembly steps of the general translocase of the mitochondrial outer membrane (TOM complex). Functions in the TOM40-specific route of the assembly of outer membrane beta-barrel proteins, including the association of TOM40 with the receptor TOM22 and small TOM proteins. Can associate with the SAM(core) complex as well as the MDM12-MMM1 complex, both involved in late steps of the major beta-barrel assembly pathway, that is responsible for biogenesis of all outer membrane beta-barrel proteins. May act as a switch that shuttles between both complexes and channels precursor proteins into the TOM40-specific pathway. Plays a role in mitochondrial morphology and in the inheritance of mitochondria. In Chaetomium globosum (strain ATCC 6205 / CBS 148.51 / DSM 1962 / NBRC 6347 / NRRL 1970) (Soil fungus), this protein is Mitochondrial distribution and morphology protein 10.